A 122-amino-acid chain; its full sequence is MSKALLKFVRLSPTKARLIARQIQGMNAELAIASLEFTPNKAARVLSKVVASAVANGSLDAKSALIVSCRVDAGPVLRRSIPRAKGRATAIRKPTSHVFVEVVEGKEMKSSKSHKKNQAEGK.

Residues 103–122 (VEGKEMKSSKSHKKNQAEGK) form a disordered region.

This sequence belongs to the universal ribosomal protein uL22 family. In terms of assembly, part of the 50S ribosomal subunit.

Its function is as follows. This protein binds specifically to 23S rRNA; its binding is stimulated by other ribosomal proteins, e.g. L4, L17, and L20. It is important during the early stages of 50S assembly. It makes multiple contacts with different domains of the 23S rRNA in the assembled 50S subunit and ribosome. The globular domain of the protein is located near the polypeptide exit tunnel on the outside of the subunit, while an extended beta-hairpin is found that lines the wall of the exit tunnel in the center of the 70S ribosome. The protein is Large ribosomal subunit protein uL22 of Helicobacter pylori (strain P12).